Consider the following 2290-residue polypeptide: Protein Ycf2 (2290 aa).

1644-1651 (GSIGTGRS) is an ATP binding site.

The protein belongs to the Ycf2 family.

The protein localises to the plastid. It is found in the chloroplast stroma. Functionally, probable ATPase of unknown function. Its presence in a non-photosynthetic plant (Epifagus virginiana) and experiments in tobacco indicate that it has an essential function which is probably not related to photosynthesis. The polypeptide is Protein Ycf2 (Nasturtium officinale (Watercress)).